The sequence spans 110 residues: Chorion class B protein M2410 (110 aa).

A run of 4 repeats spans residues 1–4 (YGGL), 5–9 (GYGGL), 10–14 (GYGGL), and 15–19 (GYGGL). A 4 X 5 AA tandem repeats of G-Y-G-G-L region spans residues 1–19 (YGGLGYGGLGYGGLGYGGL). The interval 1 to 27 (YGGLGYGGLGYGGLGYGGLGGGCGRGF) is left arm. The segment at 28–96 (SGGGLPVATA…GNGDVGITRE (69 aa)) is central domain. The right arm (Gly-rich tandem repeats) stretch occupies residues 97–110 (GGLGYGAGYGGGYG).

This sequence belongs to the chorion protein family.

Functionally, this protein is one of many from the eggshell of the silk moth. This is Chorion class B protein M2410 from Bombyx mori (Silk moth).